The chain runs to 341 residues: Anthranilate phosphoribosyltransferase (341 aa).

Residues Gly-84, 87–88 (GD), Thr-92, 94–97 (NVTT), 112–120 (KCGNRSVSS), and Ser-124 contribute to the 5-phospho-alpha-D-ribose 1-diphosphate site. Gly-84 contributes to the anthranilate binding site. Residue Thr-96 participates in Mg(2+) binding. Asn-115 lines the anthranilate pocket. An anthranilate-binding site is contributed by Arg-170. Positions 228 and 229 each coordinate Mg(2+).

It belongs to the anthranilate phosphoribosyltransferase family. In terms of assembly, homodimer. Mg(2+) is required as a cofactor.

The enzyme catalyses N-(5-phospho-beta-D-ribosyl)anthranilate + diphosphate = 5-phospho-alpha-D-ribose 1-diphosphate + anthranilate. It participates in amino-acid biosynthesis; L-tryptophan biosynthesis; L-tryptophan from chorismate: step 2/5. Functionally, catalyzes the transfer of the phosphoribosyl group of 5-phosphorylribose-1-pyrophosphate (PRPP) to anthranilate to yield N-(5'-phosphoribosyl)-anthranilate (PRA). The sequence is that of Anthranilate phosphoribosyltransferase from Corynebacterium diphtheriae (strain ATCC 700971 / NCTC 13129 / Biotype gravis).